Reading from the N-terminus, the 295-residue chain is Ribosomal RNA small subunit methyltransferase H (295 aa).

S-adenosyl-L-methionine is bound by residues 32-34 (GGY), aspartate 50, phenylalanine 77, aspartate 98, and glutamine 105. Positions 275–295 (KEISENTRSRSAKLRGIVKEE) are disordered.

The protein belongs to the methyltransferase superfamily. RsmH family.

The protein localises to the cytoplasm. The catalysed reaction is cytidine(1402) in 16S rRNA + S-adenosyl-L-methionine = N(4)-methylcytidine(1402) in 16S rRNA + S-adenosyl-L-homocysteine + H(+). Functionally, specifically methylates the N4 position of cytidine in position 1402 (C1402) of 16S rRNA. The chain is Ribosomal RNA small subunit methyltransferase H from Anaplasma phagocytophilum (strain HZ).